The primary structure comprises 4144 residues: DNA-dependent protein kinase catalytic subunit (4144 aa).

Lys127 carries the post-translational modification N6-acetyllysine. One copy of the HEAT 1 repeat lies at 298-333 (DNYVSLFEVLSKWCSHTNVEMKKAAHSALESFLKQV). Phosphoserine is present on residues Ser521, Ser851, and Ser903. The HEAT 2 repeat unit spans residues 1014–1050 (QDTVALLETILDGIVDPVDSTLRDFCGRCIREFLKWS). Ser1075 carries the phosphoserine modification. Position 1219 is an N6-acetyllysine (Lys1219). The tract at residues 1516–1551 (LDPSCKRLASGLLELAFAFGGLCEHLVDLLLDTAVL) is interaction with C1D. Residues 1516 to 1551 (LDPSCKRLASGLLELAFAFGGLCEHLVDLLLDTAVL) form a leucine-zipper region. Residues 1736-1769 (PMKSEEFPVGTLRYSNYVDCMKKFLDALELSQSP) form a TPR 1 repeat. Position 1983 is an N6-acetyllysine (Lys1983). Ser2069 is modified (phosphoserine; by autocatalysis). Lys2271 is subject to N6-acetyllysine. Residues 2448–3228 (LDIIYKMMAK…DHSLSMDEER (781 aa)) are KIP-binding. Thr2547 is subject to Phosphothreonine. A Phosphothreonine; by autocatalysis modification is found at Thr2621. The residue at position 2624 (Ser2624) is a Phosphoserine; by autocatalysis. Residues Thr2650 and Thr2659 each carry the phosphothreonine; by autocatalysis modification. The segment at 2697 to 2729 (AQKRNEKSQRAPLKSVGPDFGEKKLGLPGDKVD) is disordered. Residues 2716–2729 (FGEKKLGLPGDKVD) are compositionally biased toward basic and acidic residues. The segment at 2753–2781 (EKLSLIYARKGIAEQKREKEIKSELKMKH) is may split the end of the DNA molecule, with the two strands separating around the region. Residue Ser2805 is modified to Phosphoserine. 3 TPR repeats span residues 2903 to 2935 (PVGV…VSPD), 2936 to 2964 (VVRW…SEIG), and 2965 to 2998 (TKQI…EEWV). The region spanning 2922–3555 (PAKQFKGRMR…VYPFIISSES (634 aa)) is the FAT domain. Position 3221 is a phosphoserine (Ser3221). 4 positions are modified to N6-acetyllysine: Lys3257, Lys3276, Lys3654, and Lys3658. The TPR 5 repeat unit spans residues 3711–3748 (LRNELEIPGQYDGKGKPLPEYHARIAGFDERIKVMASI). The PI3K/PI4K catalytic domain occupies 3738–4069 (FDERIKVMAS…IHYAKRKLAG (332 aa)). A G-loop region spans residues 3744–3750 (VMASIRK). Phosphoserine is present on residues Ser3747 and Ser3837. Residues 3935 to 3943 (GIGDRHLNN) are catalytic loop. The segment at 3955 to 3980 (GIDFGHAFGSATQFLPVPELMPFRLT) is activation loop. A Phosphoserine modification is found at Ser4042. One can recognise an FATC domain in the interval 4112–4144 (NGLSEEAQVKCLIDQATDPNILGRTWIGWEPWM).

The protein belongs to the PI3/PI4-kinase family. In terms of assembly, DNA-PK is a heterotrimer of PRKDC and the Ku dimer (composed of XRCC6/Ku70 and XRCC5/Ku86). Formation of this complex may be promoted by interaction with ILF3. Component of the core long-range non-homologous end joining (NHEJ) complex (also named DNA-PK complex) composed of PRKDC, LIG4, XRCC4, XRCC6/Ku70, XRCC5/Ku86 and NHEJ1/XLF. Additional component of the NHEJ complex includes PAXX. Following autophosphorylation, PRKDC dissociates from DNA. Interacts with DNA-PKcs-interacting protein (KIP) with the region upstream the kinase domain. PRKDC alone also interacts with and phosphorylates DCLRE1C, thereby activating the latent endonuclease activity of this protein. Interacts with C1D. Interacts with TTI1 and TELO2. Interacts with CIB1. Interacts with SETX. Interacts with NR4A3; the DNA-dependent protein kinase complex DNA-PK phosphorylates and activates NR4A3 and prevents NR4A3 ubiquitination and degradation. Interacts with BRAT1. Part of the HDP-RNP complex composed of at least HEXIM1, PRKDC, XRCC5, XRCC6, paraspeckle proteins (SFPQ, NONO, PSPC1, RBM14, and MATR3) and NEAT1 RNA. Interacts with KAT5. In terms of processing, autophosphorylated at two clusters, the T2609 cluster and the S2056 cluster. Autophosphorylated on Ser-2069, Thr-2621, Thr-2650 and Thr-2659. Ser-2069 and Thr-2621 are DNA damage-inducible phosphorylation sites (inducible with ionizing radiation, IR) dephosphorylated by PPP5C. Autophosphorylation induces a conformational change that leads to remodeling of the DNA-PK complex, requisite for efficient end processing and DNA repair. Autophosphorylation in trans within DNA-PK complexes loaded on DNA ends leads to the dissociation of PRKDC from DNA and the transition into the short-range NHEJ complex. Autophosphorylation of the T2609 cluster is required for hematopoietic development and protein synthesis in erythrocytes precursors. Post-translationally, S-nitrosylated by GAPDH. Polyubiquitinated by RNF144A, leading to proteasomal degradation.

The protein localises to the nucleus. It localises to the nucleolus. It is found in the cytoplasm. The protein resides in the cytosol. The enzyme catalyses L-seryl-[protein] + ATP = O-phospho-L-seryl-[protein] + ADP + H(+). It catalyses the reaction L-threonyl-[protein] + ATP = O-phospho-L-threonyl-[protein] + ADP + H(+). With respect to regulation, activity seems to be attenuated by autophosphorylation. Binding to the SL1 region of U3 small nucleolar RNA promotes auto-phosphorylation activity. Inhibited by wortmannin. Its function is as follows. Serine/threonine-protein kinase that acts as a molecular sensor for DNA damage. Involved in DNA non-homologous end joining (NHEJ) required for double-strand break (DSB) repair and V(D)J recombination. Must be bound to DNA to express its catalytic properties. Promotes processing of hairpin DNA structures in V(D)J recombination by activation of the hairpin endonuclease artemis (DCLRE1C). Recruited by XRCC5 and XRCC6 to DNA ends and is required to (1) protect and align broken ends of DNA, thereby preventing their degradation, (2) and sequester the DSB for repair by NHEJ. Acts as a scaffold protein to aid the localization of DNA repair proteins to the site of damage. The assembly of the DNA-PK complex at DNA ends is also required for the NHEJ ligation step. Found at the ends of chromosomes, suggesting a further role in the maintenance of telomeric stability and the prevention of chromosomal end fusion. Also involved in modulation of transcription. As part of the DNA-PK complex, involved in the early steps of ribosome assembly by promoting the processing of precursor rRNA into mature 18S rRNA in the small-subunit processome. Binding to U3 small nucleolar RNA, recruits PRKDC and XRCC5/Ku86 to the small-subunit processome. Recognizes the substrate consensus sequence [ST]-Q. Phosphorylates 'Ser-139' of histone variant H2AX, thereby regulating DNA damage response mechanism. Phosphorylates ASF1A, DCLRE1C, c-Abl/ABL1, histone H1, HSPCA, c-jun/JUN, p53/TP53, PARP1, POU2F1, DHX9, FH, SRF, NHEJ1/XLF, XRCC1, XRCC4, XRCC5, XRCC6, WRN, MYC and RFA2. Can phosphorylate C1D not only in the presence of linear DNA but also in the presence of supercoiled DNA. Ability to phosphorylate p53/TP53 in the presence of supercoiled DNA is dependent on C1D. Acts as a regulator of the phosphatidylinositol 3-kinase/protein kinase B signal transduction by mediating phosphorylation of 'Ser-473' of protein kinase B (PKB/AKT1, PKB/AKT2, PKB/AKT3), promoting their activation. Contributes to the determination of the circadian period length by antagonizing phosphorylation of CRY1 'Ser-588' and increasing CRY1 protein stability, most likely through an indirect mechanism. Plays a role in the regulation of DNA virus-mediated innate immune response by assembling into the HDP-RNP complex, a complex that serves as a platform for IRF3 phosphorylation and subsequent innate immune response activation through the cGAS-STING pathway. Also regulates the cGAS-STING pathway by catalyzing phosphorylation of CGAS, thereby impairing CGAS oligomerization and activation. Also regulates the cGAS-STING pathway by mediating phosphorylation of PARP1. This Canis lupus familiaris (Dog) protein is DNA-dependent protein kinase catalytic subunit (PRKDC).